The chain runs to 614 residues: Adenylate kinase 7 (614 aa).

Residues 258–503 (PIKICILGPP…KEIGKPRNYG (246 aa)) are adenylate kinase. ATP is bound at residue 268–273 (AVGKSS). The tract at residues 288–346 (KMKDVIAEAIAKLEAIVAPKDSVEGEEEGEEEEEEENVDDAQELLDGIKESMEQNAGRL) is NMP. The tract at residues 308-327 (DSVEGEEEGEEEEEEENVDD) is disordered. Positions 311–327 (EGEEEGEEEEEEENVDD) are enriched in acidic residues. AMP-binding positions include 323 to 346 (ENVD…AGRL), 373 to 376 (GFPK), and Gln380. Residues 376–568 (KTYDQAKDLF…EERELLEVQS (193 aa)) adopt a coiled-coil conformation. Residues 428–438 (NLPESVVAGTH) form an LID region. Arg446 is a binding site for AMP. Residue Gly478 participates in ATP binding. Residues 570-614 (PLRNYLMTYVMPTLMQGLNECCKVRPEDPVDFLAEYLFKNNPEMQ) are DPY-30.

In the central section; belongs to the adenylate kinase family. It in the C-terminal section; belongs to the dpy-30 family.

The protein localises to the cytoplasm. It is found in the cytosol. Its subcellular location is the cell projection. The protein resides in the cilium. It localises to the flagellum. The enzyme catalyses AMP + ATP = 2 ADP. The catalysed reaction is a 2'-deoxyribonucleoside 5'-diphosphate + ATP = a 2'-deoxyribonucleoside 5'-triphosphate + ADP. It carries out the reaction a ribonucleoside 5'-diphosphate + ATP = a ribonucleoside 5'-triphosphate + ADP. Functionally, nucleoside monophosphate (NMP) kinase that catalyzes the reversible transfer of the terminal phosphate group between nucleoside triphosphates and monophosphates. Has highest activity toward AMP, and weaker activity toward dAMP, CMP and dCMP. Also displays broad nucleoside diphosphate kinase activity. Involved in maintaining ciliary structure and function. This chain is Adenylate kinase 7 (Ak7), found in Mus musculus (Mouse).